We begin with the raw amino-acid sequence, 251 residues long: Triosephosphate isomerase 1 (251 aa).

9–11 (NWK) is a binding site for substrate. The active-site Electrophile is the His-95. Glu-167 functions as the Proton acceptor in the catalytic mechanism. Residues Gly-173, Ser-213, and 234-235 (GG) each bind substrate.

This sequence belongs to the triosephosphate isomerase family. Homodimer.

It is found in the cytoplasm. The enzyme catalyses D-glyceraldehyde 3-phosphate = dihydroxyacetone phosphate. It participates in carbohydrate biosynthesis; gluconeogenesis. It functions in the pathway carbohydrate degradation; glycolysis; D-glyceraldehyde 3-phosphate from glycerone phosphate: step 1/1. Involved in the gluconeogenesis. Catalyzes stereospecifically the conversion of dihydroxyacetone phosphate (DHAP) to D-glyceraldehyde-3-phosphate (G3P). In Listeria monocytogenes serovar 1/2a (strain ATCC BAA-679 / EGD-e), this protein is Triosephosphate isomerase 1.